Consider the following 187-residue polypeptide: Orotate phosphoribosyltransferase (187 aa).

5-phospho-alpha-D-ribose 1-diphosphate-binding positions include arginine 103, lysine 104, lysine 107, and 129 to 137; that span reads EDVTTSGGS. Orotate-binding residues include threonine 133 and arginine 161.

It belongs to the purine/pyrimidine phosphoribosyltransferase family. PyrE subfamily. As to quaternary structure, homodimer. Mg(2+) is required as a cofactor.

It catalyses the reaction orotidine 5'-phosphate + diphosphate = orotate + 5-phospho-alpha-D-ribose 1-diphosphate. The protein operates within pyrimidine metabolism; UMP biosynthesis via de novo pathway; UMP from orotate: step 1/2. Functionally, catalyzes the transfer of a ribosyl phosphate group from 5-phosphoribose 1-diphosphate to orotate, leading to the formation of orotidine monophosphate (OMP). This chain is Orotate phosphoribosyltransferase, found in Methanosarcina acetivorans (strain ATCC 35395 / DSM 2834 / JCM 12185 / C2A).